Here is a 257-residue protein sequence, read N- to C-terminus: Protein TONNEAU 1b (257 aa).

Residues 73 to 105 (SGRLLSALICEYLDWAQLNHTLKVYQPECNSAK) enclose the LisH domain. Disordered stretches follow at residues 148 to 216 (QVMG…EDMP) and 231 to 257 (LDRK…EGKD). The segment covering 187–199 (SVSASQASGAATS) has biased composition (low complexity). Basic and acidic residues-rich tracts occupy residues 201–212 (YRKDESNWRYDT) and 244–257 (NVKD…EGKD).

Interacts with CEN1, LNG1/TRM2 and LNG2/TRM1 (via C-terminus).

The protein localises to the cytoplasm. It is found in the cytoskeleton. Functionally, involved in the control of the dynamic organization of the cortical cytoskeleton. May play a role in the organization of microtubule arrays at the centrosome through interaction with centrin 1 (CEN1). The protein is Protein TONNEAU 1b (TON1B) of Arabidopsis thaliana (Mouse-ear cress).